The following is a 198-amino-acid chain: Holliday junction branch migration complex subunit RuvA (198 aa).

The segment at 1 to 63 (MYDYIKGQLT…EDAQLLFGFH (63 aa)) is domain I. The interval 64 to 142 (SEEEKDVFLK…EAPKEESSKL (79 aa)) is domain II. The interval 143-147 (PKAKH) is flexible linker. The interval 148-198 (QENEQLDEAIEALLALGYKATELKKIRAFFEGTSETAEQYIKSALKMLMKG) is domain III.

Belongs to the RuvA family. Homotetramer. Forms an RuvA(8)-RuvB(12)-Holliday junction (HJ) complex. HJ DNA is sandwiched between 2 RuvA tetramers; dsDNA enters through RuvA and exits via RuvB. An RuvB hexamer assembles on each DNA strand where it exits the tetramer. Each RuvB hexamer is contacted by two RuvA subunits (via domain III) on 2 adjacent RuvB subunits; this complex drives branch migration. In the full resolvosome a probable DNA-RuvA(4)-RuvB(12)-RuvC(2) complex forms which resolves the HJ.

It is found in the cytoplasm. The RuvA-RuvB-RuvC complex processes Holliday junction (HJ) DNA during genetic recombination and DNA repair, while the RuvA-RuvB complex plays an important role in the rescue of blocked DNA replication forks via replication fork reversal (RFR). RuvA specifically binds to HJ cruciform DNA, conferring on it an open structure. The RuvB hexamer acts as an ATP-dependent pump, pulling dsDNA into and through the RuvAB complex. HJ branch migration allows RuvC to scan DNA until it finds its consensus sequence, where it cleaves and resolves the cruciform DNA. In Streptococcus equi subsp. zooepidemicus (strain MGCS10565), this protein is Holliday junction branch migration complex subunit RuvA.